We begin with the raw amino-acid sequence, 445 residues long: Phosphoglucosamine mutase (445 aa).

Ser102 (phosphoserine intermediate) is an active-site residue. Residues Ser102, Asp241, Asp243, and Asp245 each coordinate Mg(2+). A Phosphoserine modification is found at Ser102.

The protein belongs to the phosphohexose mutase family. Requires Mg(2+) as cofactor. Post-translationally, activated by phosphorylation.

The enzyme catalyses alpha-D-glucosamine 1-phosphate = D-glucosamine 6-phosphate. Catalyzes the conversion of glucosamine-6-phosphate to glucosamine-1-phosphate. This chain is Phosphoglucosamine mutase, found in Acinetobacter baumannii (strain SDF).